The sequence spans 339 residues: Centromere protein N (339 aa).

Residues serine 226 and serine 235 each carry the phosphoserine modification.

It belongs to the CENP-N/CHL4 family. Component of the CENPA-NAC complex, at least composed of CENPA, CENPC, CENPH, CENPM, CENPN, CENPT and CENPU. The CENPA-NAC complex interacts with the CENPA-CAD complex, composed of CENPI, CENPK, CENPL, CENPO, CENPP, CENPQ, CENPR and CENPS. Interacts directly with CENPA. Identified in a centromere complex containing histones H2A, H2B and H4, and at least CENPA, CENPB, CENPC, CENPT, CENPN, HJURP, SUPT16H, SSRP1 and RSF1.

It localises to the nucleus. Its subcellular location is the chromosome. The protein resides in the centromere. It is found in the kinetochore. Its function is as follows. Component of the CENPA-NAC (nucleosome-associated) complex, a complex that plays a central role in assembly of kinetochore proteins, mitotic progression and chromosome segregation. The CENPA-NAC complex recruits the CENPA-CAD (nucleosome distal) complex and may be involved in incorporation of newly synthesized CENPA into centromeres. CENPN is the first protein to bind specifically to CENPA nucleosomes and the direct binding of CENPA nucleosomes by CENPN is required for centromere assembly. Required for chromosome congression and efficiently align the chromosomes on a metaphase plate. The chain is Centromere protein N (CENPN) from Bos taurus (Bovine).